A 278-amino-acid polypeptide reads, in one-letter code: Large ribosomal subunit protein uL2 (278 aa).

Disordered regions lie at residues 1–20 (MGIRKYKPTTPGRRGASVSD), 25–58 (TRSTPEKSLVRPLHGKGGRNAHGRITTRHKGGGH), and 223–278 (GVVM…GKKR). Basic residues predominate over residues 37–58 (LHGKGGRNAHGRITTRHKGGGH). Basic and acidic residues predominate over residues 253–268 (PEGRTRKPNKPSDKLI). A compositionally biased stretch (basic residues) spans 269-278 (VRRRRTGKKR).

This sequence belongs to the universal ribosomal protein uL2 family. In terms of assembly, part of the 50S ribosomal subunit. Forms a bridge to the 30S subunit in the 70S ribosome.

Functionally, one of the primary rRNA binding proteins. Required for association of the 30S and 50S subunits to form the 70S ribosome, for tRNA binding and peptide bond formation. It has been suggested to have peptidyltransferase activity; this is somewhat controversial. Makes several contacts with the 16S rRNA in the 70S ribosome. The sequence is that of Large ribosomal subunit protein uL2 from Mycolicibacterium smegmatis (strain ATCC 700084 / mc(2)155) (Mycobacterium smegmatis).